The primary structure comprises 510 residues: Putative cytochrome P450 cyp-13B1 (510 aa).

Residue C456 coordinates heme.

Belongs to the cytochrome P450 family. Heme serves as cofactor.

Cytochromes P450 are a group of heme-thiolate monooxygenases. They oxidize a variety of structurally unrelated compounds, including steroids, fatty acids, and xenobiotics. May play a role in the regulation of lifespan. This is Putative cytochrome P450 cyp-13B1 from Caenorhabditis elegans.